The chain runs to 320 residues: Bifunctional ligase/repressor BirA (320 aa).

A DNA-binding region (H-T-H motif) is located at residues 22–41 (GEQLGERLGMSRAAINKHIQ). The region spanning 66 to 254 (LLDADRIHSQ…KLRAALELFE (189 aa)) is the BPL/LPL catalytic domain. Biotin is bound by residues 89-91 (STN), Gln112, 116-118 (RGR), and Lys183.

The protein belongs to the biotin--protein ligase family.

It catalyses the reaction biotin + L-lysyl-[protein] + ATP = N(6)-biotinyl-L-lysyl-[protein] + AMP + diphosphate + H(+). In terms of biological role, acts both as a biotin--[acetyl-CoA-carboxylase] ligase and a biotin-operon repressor. In the presence of ATP, BirA activates biotin to form the BirA-biotinyl-5'-adenylate (BirA-bio-5'-AMP or holoBirA) complex. HoloBirA can either transfer the biotinyl moiety to the biotin carboxyl carrier protein (BCCP) subunit of acetyl-CoA carboxylase, or bind to the biotin operator site and inhibit transcription of the operon. This chain is Bifunctional ligase/repressor BirA, found in Salmonella typhimurium (strain LT2 / SGSC1412 / ATCC 700720).